The following is a 265-amino-acid chain: NAD kinase 1 (265 aa).

Asp45 serves as the catalytic Proton acceptor. NAD(+) contacts are provided by residues 45–46 (DG), His50, 122–123 (NE), Arg148, Asp150, and Ala185.

Belongs to the NAD kinase family. A divalent metal cation is required as a cofactor.

It is found in the cytoplasm. It carries out the reaction NAD(+) + ATP = ADP + NADP(+) + H(+). In terms of biological role, involved in the regulation of the intracellular balance of NAD and NADP, and is a key enzyme in the biosynthesis of NADP. Catalyzes specifically the phosphorylation on 2'-hydroxyl of the adenosine moiety of NAD to yield NADP. The sequence is that of NAD kinase 1 from Halalkalibacterium halodurans (strain ATCC BAA-125 / DSM 18197 / FERM 7344 / JCM 9153 / C-125) (Bacillus halodurans).